The following is a 2216-amino-acid chain: Protein Ycf2 (2216 aa).

ATP is bound at residue 1567 to 1574 (GSIGTGRS).

The protein belongs to the Ycf2 family.

The protein resides in the plastid stroma. In terms of biological role, probable ATPase of unknown function. Its presence in a non-photosynthetic plant (Epifagus virginiana) and experiments in tobacco indicate that it has an essential function which is probably not related to photosynthesis. The polypeptide is Protein Ycf2 (Epifagus virginiana (Beechdrops)).